The primary structure comprises 587 residues: MATATPVQQRAGSRASAPATPFSPTRLSRLQEKEELRELNDRLAVYIDKVRSLETENSALQLQVTEREEVRGRELTGLKALYETELADARRALDDTARERAKLQIELGKFKAEHDQLLLNYAKKESDLSGAQIKLREYEAALNSKDAALATALGDKKSLEGDLEDLKDQIAQLEASLSAAKKQLADETLLKVDLENRCQSLTEDLEFRKNMYEEEINETRRKHETRLVEVDSGRQIEYEYKLAQALHEMREQHDAQVRLYKEELEQTYHAKLENARLSSEMNTSTVNSARGGMMESRMRIESLSSQLSNLQKDSRACLERIQELEDMLAKERDNSRRMLSDKEREMAEIRDQMQQQLNDYEQLLDVKLALDMEISAYRKLLEGEEERLKLSPSPSSRVTVSRASSSRSVRTTRGKRKRVDVEESEASSSVSISHSASATGNVCIEEIDVDGKFIRLKNTSEQDQPMGGWEMIRKIGDTSVSYKYTSRYVLKAGQTVTVWAANAGVTASPPTDLIWKNQNSWGTGEDVKVVLKNSQGEEVAQRSTVFKTTIPEEEEEEEEEPIGVPLEEERFHQQGTPRASNKSCAIM.

The span at 1 to 11 shows a compositional bias: polar residues; sequence MATATPVQQRA. Positions 1-29 are disordered; sequence MATATPVQQRAGSRASAPATPFSPTRLSR. Ala-2 carries the N-acetylalanine modification. The head stretch occupies residues 2–34; sequence ATATPVQQRAGSRASAPATPFSPTRLSRLQEKE. Thr-3 and Thr-5 each carry phosphothreonine. Arg-14 is modified (omega-N-methylarginine). Ser-16 is modified (phosphoserine). Thr-20 carries the post-translational modification Phosphothreonine. Ser-23 carries the phosphoserine modification. Phosphothreonine is present on Thr-25. Position 28 is a phosphoserine (Ser-28). The IF rod domain occupies 32–388; it reads EKEELRELND…KLLEGEEERL (357 aa). Residues 35–69 are coil 1A; that stretch reads ELRELNDRLAVYIDKVRSLETENSALQLQVTEREE. The segment at 70–81 is linker 1; that stretch reads VRGRELTGLKAL. The tract at residues 82–215 is coil 1B; sequence YETELADARR…EFRKNMYEEE (134 aa). Lys-102 participates in a covalent cross-link: Glycyl lysine isopeptide (Lys-Gly) (interchain with G-Cter in SUMO2). Position 111 is an N6-acetyllysine (Lys-111). Residue Lys-123 forms a Glycyl lysine isopeptide (Lys-Gly) (interchain with G-Cter in SUMO2) linkage. A Phosphoserine modification is found at Ser-126. Lys-145 is covalently cross-linked (Glycyl lysine isopeptide (Lys-Gly) (interchain with G-Cter in SUMO2)). Lys-157 is subject to N6-acetyllysine; alternate. Lys-157 is covalently cross-linked (Glycyl lysine isopeptide (Lys-Gly) (interchain with G-Cter in SUMO2); alternate). A Phosphoserine modification is found at Ser-158. Lys-181 is covalently cross-linked (Glycyl lysine isopeptide (Lys-Gly) (interchain with G-Cter in SUMO2)). Ser-200 and Ser-232 each carry phosphoserine. The linker 2 stretch occupies residues 216-243; that stretch reads INETRRKHETRLVEVDSGRQIEYEYKLA. Glycyl lysine isopeptide (Lys-Gly) (interchain with G-Cter in SUMO2) cross-links involve residues Lys-241 and Lys-261. A coil 2 region spans residues 244–386; it reads QALHEMREQH…YRKLLEGEEE (143 aa). Lys-271 is subject to N6-acetyllysine; alternate. Lys-271 participates in a covalent cross-link: Glycyl lysine isopeptide (Lys-Gly) (interchain with G-Cter in SUMO2); alternate. Phosphoserine occurs at positions 278 and 302. Lys-312 participates in a covalent cross-link: Glycyl lysine isopeptide (Lys-Gly) (interchain with G-Cter in SUMO2). Lys-330 carries the N6-acetyllysine; alternate modification. Lys-330 is covalently cross-linked (Glycyl lysine isopeptide (Lys-Gly) (interchain with G-Cter in SUMO2); alternate). Ser-375 and Ser-393 each carry phosphoserine. Residues 387-587 form a tail region; that stretch reads RLKLSPSPSS…RASNKSCAIM (201 aa). Low complexity predominate over residues 390-409; the sequence is LSPSPSSRVTVSRASSSRSV. Positions 390–432 are disordered; it reads LSPSPSSRVTVSRASSSRSVRTTRGKRKRVDVEESEASSSVSI. A glycan (O-linked (GlcNAc) threonine) is linked at Thr-399. Arg-413 bears the Omega-N-methylarginine mark. Positions 415-420 match the Nuclear localization signal motif; that stretch reads KRKRVD. The LTD domain occupies 430–546; it reads VSISHSASAT…EEVAQRSTVF (117 aa). An N6-acetyllysine modification is found at Lys-483. A Glycyl lysine isopeptide (Lys-Gly) (interchain with G-Cter in SUMO2) cross-link involves residue Lys-532. Ser-534 is modified (phosphoserine). Lys-547 is covalently cross-linked (Glycyl lysine isopeptide (Lys-Gly) (interchain with G-Cter in SUMO2)). Residues 550–587 form a disordered region; that stretch reads IPEEEEEEEEEPIGVPLEEERFHQQGTPRASNKSCAIM. Over residues 551 to 561 the composition is skewed to acidic residues; sequence PEEEEEEEEEP. A compositionally biased stretch (polar residues) spans 573-587; that stretch reads QQGTPRASNKSCAIM. The residue at position 576 (Thr-576) is a Phosphothreonine. Cys-584 bears the Cysteine methyl ester mark. A lipid anchor (S-farnesyl cysteine) is attached at Cys-584. The propeptide at 585–587 is removed in mature form; that stretch reads AIM.

The protein belongs to the intermediate filament family. Homodimer. Lamin dimers then assemble into dimeric head-to-tail polymers. Ultimately, two head-to-tail polymers assemble laterally into a protofilament with a uniformly shaped rod of 3.5 nm in diameter. Interacts with SPAG4 and SEPT12. B-type lamins undergo a series of modifications, such as farnesylation and phosphorylation. Increased phosphorylation of the lamins occurs before envelope disintegration and probably plays a role in regulating lamin associations. Post-translationally, phosphorylation plays a key role in lamin organization, subcellular localization and nuclear envelope disintegration. Phosphorylation by CDK1 at Ser-23 and Ser-393 at the onset of mitosis drives lamin disassembly and nuclear envelope breakdown.

Its subcellular location is the nucleus lamina. In terms of biological role, lamins are intermediate filament proteins that assemble into a filamentous meshwork, and which constitute the major components of the nuclear lamina, a fibrous layer on the nucleoplasmic side of the inner nuclear membrane. Lamins provide a framework for the nuclear envelope, bridging the nuclear envelope and chromatin, thereby playing an important role in nuclear assembly, chromatin organization, nuclear membrane and telomere dynamics. The structural integrity of the lamina is strictly controlled by the cell cycle, as seen by the disintegration and formation of the nuclear envelope in prophase and telophase, respectively. The protein is Lamin-B1 (Lmnb1) of Rattus norvegicus (Rat).